Consider the following 368-residue polypeptide: Cobalt-precorrin-5B C(1)-methyltransferase (368 aa).

It belongs to the CbiD family.

It carries out the reaction Co-precorrin-5B + S-adenosyl-L-methionine = Co-precorrin-6A + S-adenosyl-L-homocysteine. It participates in cofactor biosynthesis; adenosylcobalamin biosynthesis; cob(II)yrinate a,c-diamide from sirohydrochlorin (anaerobic route): step 6/10. Catalyzes the methylation of C-1 in cobalt-precorrin-5B to form cobalt-precorrin-6A. In Brucella canis (strain ATCC 23365 / NCTC 10854 / RM-666), this protein is Cobalt-precorrin-5B C(1)-methyltransferase.